The sequence spans 439 residues: ATP-dependent RNA helicase SrmB (439 aa).

Positions 4–32 match the Q motif motif; sequence SQFEQFDLSPELLKALEKKGYSRPTAIQM. The region spanning 35–209 is the Helicase ATP-binding domain; the sequence is IPAAMEESDV…AERLLNDPVK (175 aa). Residue 48 to 55 participates in ATP binding; the sequence is APTGTGKT. Positions 157-160 match the DEAD box motif; sequence DEAD. The Helicase C-terminal domain occupies 237-387; the sequence is KLLARFIETE…GLEPRTKPPK (151 aa). Residues 381–393 are compositionally biased toward basic and acidic residues; the sequence is PRTKPPKDGEVKS. The interval 381-439 is disordered; sequence PRTKPPKDGEVKSVSKKQKARIKEKREEKKKTEAKKKVKLRHKDTKNIGKRRKPSNSNV. Composition is skewed to basic residues over residues 394–403 and 412–439; these read VSKKQKARIK and TEAK…NSNV.

Belongs to the DEAD box helicase family. SrmB subfamily. Interacts with the 50S ribosomal subunit.

It localises to the cytoplasm. It carries out the reaction ATP + H2O = ADP + phosphate + H(+). Functionally, DEAD-box RNA helicase involved in the assembly of the 50S ribosomal subunit at low temperature. Exhibits RNA-stimulated ATP hydrolysis and RNA unwinding activity. The polypeptide is ATP-dependent RNA helicase SrmB (Haemophilus influenzae (strain ATCC 51907 / DSM 11121 / KW20 / Rd)).